A 433-amino-acid chain; its full sequence is 3-phosphoshikimate 1-carboxyvinyltransferase (433 aa).

3-phosphoshikimate contacts are provided by K23, S24, and R28. K23 is a binding site for phosphoenolpyruvate. Phosphoenolpyruvate is bound by residues G95 and R123. 3-phosphoshikimate is bound by residues S170, S171, Q172, S198, D317, and K344. Phosphoenolpyruvate is bound at residue Q172. The active-site Proton acceptor is the D317. Phosphoenolpyruvate is bound by residues R348, R391, and K416.

Belongs to the EPSP synthase family. As to quaternary structure, monomer.

It is found in the cytoplasm. The enzyme catalyses 3-phosphoshikimate + phosphoenolpyruvate = 5-O-(1-carboxyvinyl)-3-phosphoshikimate + phosphate. It functions in the pathway metabolic intermediate biosynthesis; chorismate biosynthesis; chorismate from D-erythrose 4-phosphate and phosphoenolpyruvate: step 6/7. In terms of biological role, catalyzes the transfer of the enolpyruvyl moiety of phosphoenolpyruvate (PEP) to the 5-hydroxyl of shikimate-3-phosphate (S3P) to produce enolpyruvyl shikimate-3-phosphate and inorganic phosphate. This is 3-phosphoshikimate 1-carboxyvinyltransferase from Neisseria meningitidis serogroup C / serotype 2a (strain ATCC 700532 / DSM 15464 / FAM18).